Reading from the N-terminus, the 315-residue chain is Adenine deaminase (315 aa).

Zn(2+)-binding residues include histidine 14, histidine 16, and histidine 194. The active-site Proton donor is the glutamate 197. Position 275 (aspartate 275) interacts with Zn(2+). Position 276 (aspartate 276) interacts with substrate.

The protein belongs to the metallo-dependent hydrolases superfamily. Adenosine and AMP deaminases family. Adenine deaminase type 2 subfamily. Requires Zn(2+) as cofactor.

The catalysed reaction is adenine + H2O + H(+) = hypoxanthine + NH4(+). Functionally, catalyzes the hydrolytic deamination of adenine to hypoxanthine. Plays an important role in the purine salvage pathway and in nitrogen catabolism. The sequence is that of Adenine deaminase from Pseudomonas putida (strain ATCC 47054 / DSM 6125 / CFBP 8728 / NCIMB 11950 / KT2440).